The sequence spans 226 residues: 7-cyano-7-deazaguanine synthase (226 aa).

Residue 10-20 (FSGGQDSTTLA) coordinates ATP. Cys-190, Cys-205, Cys-208, and Cys-211 together coordinate Zn(2+).

Belongs to the QueC family. Requires Zn(2+) as cofactor.

It carries out the reaction 7-carboxy-7-deazaguanine + NH4(+) + ATP = 7-cyano-7-deazaguanine + ADP + phosphate + H2O + H(+). Its pathway is purine metabolism; 7-cyano-7-deazaguanine biosynthesis. In terms of biological role, catalyzes the ATP-dependent conversion of 7-carboxy-7-deazaguanine (CDG) to 7-cyano-7-deazaguanine (preQ(0)). The chain is 7-cyano-7-deazaguanine synthase from Helicobacter pylori (strain Shi470).